The sequence spans 882 residues: Translation initiation factor IF-2 (882 aa).

Disordered stretches follow at residues 95–176 and 229–289; these read PSVT…ASSL and EHAR…SALQ. Polar residues predominate over residues 116 to 133; sequence TKNTFSQESLNKTSPQKS. 2 stretches are compositionally biased toward basic and acidic residues: residues 137–172 and 229–246; these read KAIEKAKIESPKKERHSLKEKQKKEAQSEKARREAE and EHARAAEDENDAKVEGDR. The span at 247-262 shows a compositional bias: basic residues; it reads RSRHRGTKTTKQKKTN. Residues 263–276 are compositionally biased toward basic and acidic residues; the sequence is KLSESKTDREEARA. Residues 382–551 enclose the tr-type G domain; sequence HRAPVVTIMG…LLQAEVLELK (170 aa). The interval 391–398 is G1; it reads GHVDHGKT. 391–398 is a binding site for GTP; it reads GHVDHGKT. Residues 416–420 form a G2 region; it reads GITQH. Residues 437-440 are G3; sequence DTPG. GTP is bound by residues 437–441 and 491–494; these read DTPGH and NKID. Residues 491–494 are G4; that stretch reads NKID. The G5 stretch occupies residues 527 to 529; that stretch reads SAK.

The protein belongs to the TRAFAC class translation factor GTPase superfamily. Classic translation factor GTPase family. IF-2 subfamily.

The protein resides in the cytoplasm. Functionally, one of the essential components for the initiation of protein synthesis. Protects formylmethionyl-tRNA from spontaneous hydrolysis and promotes its binding to the 30S ribosomal subunits. Also involved in the hydrolysis of GTP during the formation of the 70S ribosomal complex. The sequence is that of Translation initiation factor IF-2 from Hamiltonella defensa subsp. Acyrthosiphon pisum (strain 5AT).